The primary structure comprises 202 residues: MNLEQIYKDRGAYLEGHFLLSSGKHSQFYLQSAKVLEDPKLAAKLCDELAKIIASYKIEFDSICSPALGGILAGYELARACNKRFIFTERVNKEMTLRRGFEVKKGKKFIICEDIITTGGSALESAKTIESLGGIVVGFAALANRGFCGVENLKSPRKDNAKLPENLPLFTLGNFEFEIYDETNCPLCKKGSKAIKPGSRGN.

5-phospho-alpha-D-ribose 1-diphosphate contacts are provided by residues Lys93 and 113 to 121 (EDIITTGGS). Orotate contacts are provided by Thr117 and Arg145.

The protein belongs to the purine/pyrimidine phosphoribosyltransferase family. PyrE subfamily. In terms of assembly, homodimer. It depends on Mg(2+) as a cofactor.

The catalysed reaction is orotidine 5'-phosphate + diphosphate = orotate + 5-phospho-alpha-D-ribose 1-diphosphate. It participates in pyrimidine metabolism; UMP biosynthesis via de novo pathway; UMP from orotate: step 1/2. Catalyzes the transfer of a ribosyl phosphate group from 5-phosphoribose 1-diphosphate to orotate, leading to the formation of orotidine monophosphate (OMP). This chain is Orotate phosphoribosyltransferase, found in Campylobacter jejuni subsp. doylei (strain ATCC BAA-1458 / RM4099 / 269.97).